We begin with the raw amino-acid sequence, 420 residues long: Tyrosine-protein phosphatase non-receptor type 20 (420 aa).

The segment covering 1–11 (MSSPRDFRAEP) has biased composition (basic and acidic residues). 2 disordered regions span residues 1-47 (MSSP…VFEN) and 68-108 (DVFE…SQAL). Residues 31–41 (LPSSSQENTPR) show a composition bias toward polar residues. Phosphoserine is present on residues Ser-76 and Ser-120. A Tyrosine-protein phosphatase domain is found at 159–412 (IMQEFMALEL…HFCYDIVLEV (254 aa)). Substrate is bound by residues Asp-323, 353–359 (CSAGIGR), and Gln-397. The Phosphocysteine intermediate role is filled by Cys-353.

This sequence belongs to the protein-tyrosine phosphatase family. Non-receptor class subfamily. As to expression, present in many cell lines (at protein level). Widely expressed.

The protein resides in the nucleus. Its subcellular location is the cytoplasm. It localises to the cytoskeleton. The protein localises to the microtubule organizing center. It is found in the centrosome. The catalysed reaction is O-phospho-L-tyrosyl-[protein] + H2O = L-tyrosyl-[protein] + phosphate. Functionally, tyrosine-protein phosphatase targeted to sites of actin polymerization in response of varied extracellular stimuli. Has tyrosine phosphatase activity towards various tyrosyl phosphorylated substrates. This is Tyrosine-protein phosphatase non-receptor type 20 from Homo sapiens (Human).